A 229-amino-acid chain; its full sequence is Probable septum site-determining protein MinC (229 aa).

Belongs to the MinC family. In terms of assembly, interacts with MinD and FtsZ.

Cell division inhibitor that blocks the formation of polar Z ring septums. Rapidly oscillates between the poles of the cell to destabilize FtsZ filaments that have formed before they mature into polar Z rings. Prevents FtsZ polymerization. The protein is Probable septum site-determining protein MinC of Ruminiclostridium cellulolyticum (strain ATCC 35319 / DSM 5812 / JCM 6584 / H10) (Clostridium cellulolyticum).